The chain runs to 1663 residues: Cortactin-binding protein 2 (1663 aa).

5 disordered regions span residues 1-26 (MATD…TAEA), 203-225 (KKKT…DMEA), 359-440 (QASH…LHPG), 454-478 (GNAN…SPTS), and 497-615 (SRFT…PPKP). Residues 119–276 (RKMQERMSTQ…EQLKRGSDSK (158 aa)) adopt a coiled-coil conformation. 2 stretches are compositionally biased toward polar residues: residues 385 to 396 (GPSTDSAPDLTN) and 418 to 435 (QSHS…SANA). Asymmetric dimethylarginine is present on Arg498. Residues 606–615 (PTTPQLPPKP) show a composition bias toward pro residues. ANK repeat units lie at residues 709-739 (GRPT…DINY), 743-772 (DGHS…QVDA), 776-805 (NGFT…DINH), 809-838 (GGQT…DRSV), 842-871 (DGWT…PARG), and 912-942 (EGWT…EPDR). The disordered stretch occupies residues 1449-1490 (KGENGTWRKVSTSPRKKSGHFSSPTWNKPDLNEEGIRNTTTS). Ser1524 carries the phosphoserine modification. The disordered stretch occupies residues 1579-1663 (VSEKEVSPLS…KNEQVEKPNK (85 aa)). Residues 1586–1595 (PLSSHQTTEC) show a composition bias toward polar residues. Residues 1624–1638 (SQNTKRSSSSSNTRQ) show a composition bias toward low complexity. Residues 1645–1663 (SKEEIWNLHKNEQVEKPNK) are compositionally biased toward basic and acidic residues.

In terms of assembly, interacts with CTTN/cortactin SH3 domain. Interacts with STRN, STRN4/zinedin and MOB4/phocein; this interactions mediate the association with the STRIPAK core complex and may regulate dendritic spine distribution of the STRIPAK complex in hippocampal neurons. Activation of glutamate receptors weakens the interaction with STRN and STRN4.

Its subcellular location is the cytoplasm. It localises to the cell cortex. The protein resides in the cell projection. It is found in the dendritic spine. In terms of biological role, regulates the dendritic spine distribution of CTTN/cortactin in hippocampal neurons, and thus controls dendritic spinogenesis and dendritic spine maintenance. Associates with the striatin-interacting phosphatase and kinase (STRIPAK) core complex to regulate dendritic spine distribution of the STRIPAK complex in hippocampal neurons. This chain is Cortactin-binding protein 2 (CTTNBP2), found in Rhinolophus ferrumequinum (Greater horseshoe bat).